Reading from the N-terminus, the 97-residue chain is Putative septation protein SpoVG (97 aa).

It belongs to the SpoVG family.

Its function is as follows. Could be involved in septation. The protein is Putative septation protein SpoVG of Borreliella burgdorferi (strain ATCC 35210 / DSM 4680 / CIP 102532 / B31) (Borrelia burgdorferi).